We begin with the raw amino-acid sequence, 100 residues long: Urease subunit gamma (100 aa).

Belongs to the urease gamma subunit family. In terms of assembly, heterotrimer of UreA (gamma), UreB (beta) and UreC (alpha) subunits. Three heterotrimers associate to form the active enzyme.

It localises to the cytoplasm. It carries out the reaction urea + 2 H2O + H(+) = hydrogencarbonate + 2 NH4(+). It participates in nitrogen metabolism; urea degradation; CO(2) and NH(3) from urea (urease route): step 1/1. The chain is Urease subunit gamma from Cupriavidus metallidurans (strain ATCC 43123 / DSM 2839 / NBRC 102507 / CH34) (Ralstonia metallidurans).